Here is a 111-residue protein sequence, read N- to C-terminus: Large ribosomal subunit protein eL42 (111 aa).

Positions 12, 15, 72, and 77 each coordinate Zn(2+).

Belongs to the eukaryotic ribosomal protein eL42 family. As to quaternary structure, component of the large ribosomal subunit.

The protein localises to the cytoplasm. Functionally, component of the large ribosomal subunit. The ribosome is a large ribonucleoprotein complex responsible for the synthesis of proteins in the cell. The protein is Large ribosomal subunit protein eL42 (RPL36A) of Oryctolagus cuniculus (Rabbit).